A 334-amino-acid polypeptide reads, in one-letter code: Ornithine carbamoyltransferase (334 aa).

Carbamoyl phosphate-binding positions include 57–60 (STRT), glutamine 84, arginine 108, and 135–138 (HPTQ). L-ornithine-binding positions include asparagine 169, aspartate 233, and 237-238 (SM). Residues 275–276 (CL) and arginine 320 contribute to the carbamoyl phosphate site.

The protein belongs to the aspartate/ornithine carbamoyltransferase superfamily. OTCase family.

It is found in the cytoplasm. It catalyses the reaction carbamoyl phosphate + L-ornithine = L-citrulline + phosphate + H(+). The protein operates within amino-acid biosynthesis; L-arginine biosynthesis; L-arginine from L-ornithine and carbamoyl phosphate: step 1/3. In terms of biological role, reversibly catalyzes the transfer of the carbamoyl group from carbamoyl phosphate (CP) to the N(epsilon) atom of ornithine (ORN) to produce L-citrulline. In Pasteurella multocida (strain Pm70), this protein is Ornithine carbamoyltransferase (argF).